We begin with the raw amino-acid sequence, 197 residues long: Large ribosomal subunit protein mL58 (197 aa).

A mitochondrion-targeting transit peptide spans 1–20 (MLFTIKPSFLKPVGFIQTRN).

Belongs to the mitochondrion-specific ribosomal protein mL58 family. As to quaternary structure, component of the mitochondrial large ribosomal subunit (mt-LSU). Mature yeast 74S mitochondrial ribosomes consist of a small (37S) and a large (54S) subunit. The 37S small subunit contains a 15S ribosomal RNA (15S mt-rRNA) and at least 32 different proteins. The 54S large subunit contains a 21S rRNA (21S mt-rRNA) and at least 45 different proteins.

The protein resides in the mitochondrion. Functionally, component of the mitochondrial ribosome (mitoribosome), a dedicated translation machinery responsible for the synthesis of mitochondrial genome-encoded proteins, including at least some of the essential transmembrane subunits of the mitochondrial respiratory chain. The mitoribosomes are attached to the mitochondrial inner membrane and translation products are cotranslationally integrated into the membrane. In Schizosaccharomyces pombe (strain 972 / ATCC 24843) (Fission yeast), this protein is Large ribosomal subunit protein mL58 (mrpl20).